A 296-amino-acid chain; its full sequence is Formamidopyrimidine-DNA glycosylase (296 aa).

Proline 2 serves as the catalytic Schiff-base intermediate with DNA. Glutamate 3 serves as the catalytic Proton donor. Lysine 58 serves as the catalytic Proton donor; for beta-elimination activity. Residues histidine 104, arginine 126, and lysine 169 each contribute to the DNA site. The segment at 260 to 296 (SVYDREGQACGTPGCGGTVARIVQAGRSTFYCAACQK) adopts an FPG-type zinc-finger fold. Catalysis depends on arginine 286, which acts as the Proton donor; for delta-elimination activity.

It belongs to the FPG family. As to quaternary structure, monomer. Zn(2+) is required as a cofactor.

The enzyme catalyses Hydrolysis of DNA containing ring-opened 7-methylguanine residues, releasing 2,6-diamino-4-hydroxy-5-(N-methyl)formamidopyrimidine.. It carries out the reaction 2'-deoxyribonucleotide-(2'-deoxyribose 5'-phosphate)-2'-deoxyribonucleotide-DNA = a 3'-end 2'-deoxyribonucleotide-(2,3-dehydro-2,3-deoxyribose 5'-phosphate)-DNA + a 5'-end 5'-phospho-2'-deoxyribonucleoside-DNA + H(+). Its function is as follows. Involved in base excision repair of DNA damaged by oxidation or by mutagenic agents. Acts as a DNA glycosylase that recognizes and removes damaged bases. Has a preference for oxidized purines, such as 7,8-dihydro-8-oxoguanine (8-oxoG). Has AP (apurinic/apyrimidinic) lyase activity and introduces nicks in the DNA strand. Cleaves the DNA backbone by beta-delta elimination to generate a single-strand break at the site of the removed base with both 3'- and 5'-phosphates. The chain is Formamidopyrimidine-DNA glycosylase from Rhizobium etli (strain ATCC 51251 / DSM 11541 / JCM 21823 / NBRC 15573 / CFN 42).